The chain runs to 143 residues: Nucleoside diphosphate kinase (143 aa).

Positions 11, 59, 87, 93, 104, and 114 each coordinate ATP. Catalysis depends on H117, which acts as the Pros-phosphohistidine intermediate.

This sequence belongs to the NDK family. Homotetramer. Requires Mg(2+) as cofactor.

The protein localises to the cytoplasm. It carries out the reaction a 2'-deoxyribonucleoside 5'-diphosphate + ATP = a 2'-deoxyribonucleoside 5'-triphosphate + ADP. It catalyses the reaction a ribonucleoside 5'-diphosphate + ATP = a ribonucleoside 5'-triphosphate + ADP. Functionally, major role in the synthesis of nucleoside triphosphates other than ATP. The ATP gamma phosphate is transferred to the NDP beta phosphate via a ping-pong mechanism, using a phosphorylated active-site intermediate. This chain is Nucleoside diphosphate kinase, found in Shewanella sediminis (strain HAW-EB3).